We begin with the raw amino-acid sequence, 350 residues long: Holliday junction branch migration complex subunit RuvB (350 aa).

Residues methionine 1–aspartate 20 form a disordered region. A large ATPase domain (RuvB-L) region spans residues alanine 4 to tyrosine 184. ATP-binding positions include isoleucine 23, arginine 24, glycine 65, lysine 68, threonine 69, threonine 70, glutamate 131 to phenylalanine 133, arginine 174, tyrosine 184, and arginine 221. Mg(2+) is bound at residue threonine 69. The interval glycine 185–aspartate 255 is small ATPAse domain (RuvB-S). Residues glutamate 258–glutamate 350 are head domain (RuvB-H). Residues arginine 294, arginine 313, and arginine 318 each contribute to the DNA site.

Belongs to the RuvB family. As to quaternary structure, homohexamer. Forms an RuvA(8)-RuvB(12)-Holliday junction (HJ) complex. HJ DNA is sandwiched between 2 RuvA tetramers; dsDNA enters through RuvA and exits via RuvB. An RuvB hexamer assembles on each DNA strand where it exits the tetramer. Each RuvB hexamer is contacted by two RuvA subunits (via domain III) on 2 adjacent RuvB subunits; this complex drives branch migration. In the full resolvosome a probable DNA-RuvA(4)-RuvB(12)-RuvC(2) complex forms which resolves the HJ.

The protein resides in the cytoplasm. It catalyses the reaction ATP + H2O = ADP + phosphate + H(+). Functionally, the RuvA-RuvB-RuvC complex processes Holliday junction (HJ) DNA during genetic recombination and DNA repair, while the RuvA-RuvB complex plays an important role in the rescue of blocked DNA replication forks via replication fork reversal (RFR). RuvA specifically binds to HJ cruciform DNA, conferring on it an open structure. The RuvB hexamer acts as an ATP-dependent pump, pulling dsDNA into and through the RuvAB complex. RuvB forms 2 homohexamers on either side of HJ DNA bound by 1 or 2 RuvA tetramers; 4 subunits per hexamer contact DNA at a time. Coordinated motions by a converter formed by DNA-disengaged RuvB subunits stimulates ATP hydrolysis and nucleotide exchange. Immobilization of the converter enables RuvB to convert the ATP-contained energy into a lever motion, pulling 2 nucleotides of DNA out of the RuvA tetramer per ATP hydrolyzed, thus driving DNA branch migration. The RuvB motors rotate together with the DNA substrate, which together with the progressing nucleotide cycle form the mechanistic basis for DNA recombination by continuous HJ branch migration. Branch migration allows RuvC to scan DNA until it finds its consensus sequence, where it cleaves and resolves cruciform DNA. The sequence is that of Holliday junction branch migration complex subunit RuvB from Ectopseudomonas mendocina (strain ymp) (Pseudomonas mendocina).